Reading from the N-terminus, the 476-residue chain is Cytosolic iron-sulfur assembly component 3 (476 aa).

N-acetylalanine is present on Ala2. Positions 24, 71, 74, 77, 190, 246, 395, and 399 each coordinate [4Fe-4S] cluster.

This sequence belongs to the NARF family. External component of the CIA complex. In the CIA complex, interacts directly with CIAO1 and MMS19.

Component of the cytosolic iron-sulfur protein assembly (CIA) complex, a multiprotein complex that mediates the incorporation of iron-sulfur cluster into extramitochondrial Fe/S proteins. Seems to negatively regulate the level of HIF1A expression, although this effect could be indirect. In Pongo abelii (Sumatran orangutan), this protein is Cytosolic iron-sulfur assembly component 3.